Here is a 943-residue protein sequence, read N- to C-terminus: Translation initiation factor IF-2 (943 aa).

Low complexity predominate over residues 99–113; that stretch reads VKAAQTQAAPVQPEQ. The segment at 99 to 354 is disordered; it reads VKAAQTQAAP…LEPNQHAFQA (256 aa). The segment covering 117–141 has biased composition (basic and acidic residues); sequence DAVKARAEAAARAEARAKAEAEAAK. Low complexity predominate over residues 145 to 172; it reads AKAGNKAKPAAQKPTEAKAETAPVAAET. The span at 173 to 197 shows a compositional bias: basic and acidic residues; sequence KPAEPKEKAVKPKHERNGKGKDAKK. The span at 200–215 shows a compositional bias: low complexity; sequence KPAAPAVPQPVVSAEE. Positions 216–250 are enriched in basic and acidic residues; it reads QAQRDEEARRAAALRAHQEALLKEKQERQARREAM. Residues 251 to 264 are compositionally biased toward low complexity; sequence KQQAEQQAKAAQEA. Basic and acidic residues-rich tracts occupy residues 295–308 and 319–335; these read AKKE…DEGQ and GGRD…ERVR. A tr-type G domain is found at 443 to 612; that stretch reads PRPPVVTVMG…LLEAEVLELT (170 aa). Residues 452-459 form a G1 region; that stretch reads GHVDHGKT. 452–459 is a binding site for GTP; the sequence is GHVDHGKT. The interval 477–481 is G2; it reads GITQH. A G3 region spans residues 498–501; the sequence is DTPG. GTP contacts are provided by residues 498-502 and 552-555; these read DTPGH and NKID. Residues 552 to 555 form a G4 region; the sequence is NKID. Positions 588–590 are G5; it reads SAK.

The protein belongs to the TRAFAC class translation factor GTPase superfamily. Classic translation factor GTPase family. IF-2 subfamily.

It is found in the cytoplasm. In terms of biological role, one of the essential components for the initiation of protein synthesis. Protects formylmethionyl-tRNA from spontaneous hydrolysis and promotes its binding to the 30S ribosomal subunits. Also involved in the hydrolysis of GTP during the formation of the 70S ribosomal complex. This chain is Translation initiation factor IF-2, found in Neisseria gonorrhoeae (strain NCCP11945).